The chain runs to 413 residues: MYTLDDIKKEDPEIASAITDEFERQNSHIELIASENWVSPAVMSAMGSILTNKYAEGYPGRRYYGGCECVDEVEELARERAKELFGAEYVNVQPHSGAQANMAVQFAILKPGDTIMGMNLDHGGHLTHGSPVNFSGSYFHVVPYGVNDEGFIDYDKVEEIALECKPKMIIAGASAYARTIDFKRFREIADKVDAVLMVDMAHIAGLVAAGLHPSPIPYAHVTTTTTHKTLRGPRGGMILCSQEMQDKYNFNKAIFPGIQGGPLMHVIAAKAVCFKEALQPEFKEYQKQIVKNAQALCKGLQSRGIKIVSDGTDNHLMLVDLTPFGLTGKSIEKLLDAAHITANKNTIPNDPQKPFVTSGIRLGTPAATSRGLKEDDFDKVAEAIAMIIKEGESAVEPAKAIIKTLTDKYPLAF.

Residues L120 and 124–126 (GHL) each bind (6S)-5,6,7,8-tetrahydrofolate. At K228 the chain carries N6-(pyridoxal phosphate)lysine.

The protein belongs to the SHMT family. As to quaternary structure, homodimer. Pyridoxal 5'-phosphate is required as a cofactor.

Its subcellular location is the cytoplasm. It catalyses the reaction (6R)-5,10-methylene-5,6,7,8-tetrahydrofolate + glycine + H2O = (6S)-5,6,7,8-tetrahydrofolate + L-serine. The protein operates within one-carbon metabolism; tetrahydrofolate interconversion. It participates in amino-acid biosynthesis; glycine biosynthesis; glycine from L-serine: step 1/1. In terms of biological role, catalyzes the reversible interconversion of serine and glycine with tetrahydrofolate (THF) serving as the one-carbon carrier. This reaction serves as the major source of one-carbon groups required for the biosynthesis of purines, thymidylate, methionine, and other important biomolecules. Also exhibits THF-independent aldolase activity toward beta-hydroxyamino acids, producing glycine and aldehydes, via a retro-aldol mechanism. In Agathobacter rectalis (strain ATCC 33656 / DSM 3377 / JCM 17463 / KCTC 5835 / VPI 0990) (Eubacterium rectale), this protein is Serine hydroxymethyltransferase.